The sequence spans 881 residues: Mechanosensitive ion channel protein 5 (881 aa).

Basic and acidic residues-rich tracts occupy residues 1–12 (MAAVDSTDRRDF) and 48–59 (DGEKGKNDKKGD). Residues 1–248 (MAAVDSTDRR…RNGFEEEEEE (248 aa)) are disordered. Over residues 115-145 (ELQSNTPPRPATASNTPRRGLTTISESSSPV) the composition is skewed to polar residues. Over residues 169-179 (EEGRNRDEAEV) the composition is skewed to basic and acidic residues. At S231 the chain carries Phosphoserine. A run of 6 helical transmembrane segments spans residues 265-285 (LSFW…SLVC), 309-329 (VLVL…IVFL), 349-369 (KSVQ…FLFD), 387-407 (VLVC…LVKV), 642-662 (IINV…LGIA), and 677-697 (VAFV…FLFV). Positions 861–881 (PTANPTSSDRIPPSWMQQRGP) are disordered. Over residues 864–881 (NPTSSDRIPPSWMQQRGP) the composition is skewed to polar residues.

Belongs to the MscS (TC 1.A.23) family.

The protein resides in the membrane. Functionally, mechanosensitive channel that opens in response to stretch forces in the membrane lipid bilayer. The polypeptide is Mechanosensitive ion channel protein 5 (MSL5) (Arabidopsis thaliana (Mouse-ear cress)).